Reading from the N-terminus, the 250-residue chain is Geranylgeranylglyceryl phosphate synthase (250 aa).

Asp-26 and Ser-55 together coordinate Mg(2+). Sn-glycerol 1-phosphate is bound by residues 174-180 (YLEAGSG), 205-206 (GG), and 227-228 (GT).

It belongs to the GGGP/HepGP synthase family. Group II subfamily. The cofactor is Mg(2+).

It localises to the cytoplasm. The catalysed reaction is sn-glycerol 1-phosphate + (2E,6E,10E)-geranylgeranyl diphosphate = sn-3-O-(geranylgeranyl)glycerol 1-phosphate + diphosphate. The protein operates within membrane lipid metabolism; glycerophospholipid metabolism. Functionally, prenyltransferase that catalyzes the transfer of the geranylgeranyl moiety of geranylgeranyl diphosphate (GGPP) to the C3 hydroxyl of sn-glycerol-1-phosphate (G1P). This reaction is the first ether-bond-formation step in the biosynthesis of archaeal membrane lipids. In Nitrosopumilus maritimus (strain SCM1), this protein is Geranylgeranylglyceryl phosphate synthase.